A 321-amino-acid chain; its full sequence is Lipoyl synthase (321 aa).

Residues Cys68, Cys73, Cys79, Cys94, Cys98, Cys101, and Ser308 each contribute to the [4Fe-4S] cluster site. A Radical SAM core domain is found at 80–297 (FNHGTATFMI…KVIALELGFT (218 aa)).

Belongs to the radical SAM superfamily. Lipoyl synthase family. The cofactor is [4Fe-4S] cluster.

The protein localises to the cytoplasm. The enzyme catalyses [[Fe-S] cluster scaffold protein carrying a second [4Fe-4S](2+) cluster] + N(6)-octanoyl-L-lysyl-[protein] + 2 oxidized [2Fe-2S]-[ferredoxin] + 2 S-adenosyl-L-methionine + 4 H(+) = [[Fe-S] cluster scaffold protein] + N(6)-[(R)-dihydrolipoyl]-L-lysyl-[protein] + 4 Fe(3+) + 2 hydrogen sulfide + 2 5'-deoxyadenosine + 2 L-methionine + 2 reduced [2Fe-2S]-[ferredoxin]. It participates in protein modification; protein lipoylation via endogenous pathway; protein N(6)-(lipoyl)lysine from octanoyl-[acyl-carrier-protein]: step 2/2. Its function is as follows. Catalyzes the radical-mediated insertion of two sulfur atoms into the C-6 and C-8 positions of the octanoyl moiety bound to the lipoyl domains of lipoate-dependent enzymes, thereby converting the octanoylated domains into lipoylated derivatives. This chain is Lipoyl synthase, found in Aliivibrio salmonicida (strain LFI1238) (Vibrio salmonicida (strain LFI1238)).